Consider the following 2009-residue polypeptide: Sodium channel protein type 1 subunit alpha (2009 aa).

The Cytoplasmic portion of the chain corresponds to 1 to 128; the sequence is MEQTVLVPPG…KIAIKILVHS (128 aa). The segment covering 28 to 48 has biased composition (basic and acidic residues); it reads RIAEEKAKNPKPDKKDDDENG. Positions 28–60 are disordered; that stretch reads RIAEEKAKNPKPDKKDDDENGPKPNSDLEAGKN. An I repeat occupies 110–454; sequence ILTPFNPLRK…QQMLEQLKKQ (345 aa). Residues 129-146 traverse the membrane as a helical segment; the sequence is LFSMLIMCTILTNCVFMT. Over 147-152 the chain is Extracellular; it reads MSNPPD. Residues 153-177 traverse the membrane as a helical segment; the sequence is WTKNVEYTFTGIYTFESLIKIIARG. Over 178–188 the chain is Cytoplasmic; it reads FCLEDFTFLRD. A helical transmembrane segment spans residues 189-205; the sequence is PWNWLDFTVITFAYVTE. Over 206 to 213 the chain is Extracellular; the sequence is FVDLGNVS. The helical transmembrane segment at 214–235 threads the bilayer; sequence ALRTFRVLRALKTISVIPGLKT. The Cytoplasmic portion of the chain corresponds to 236–245; sequence IVGALIQSVK. The chain crosses the membrane as a helical span at residues 246–269; the sequence is KLSDVMILTVFCLSVFALIGLQLF. At 270–369 the chain is on the extracellular side; the sequence is MGNLRNKCVQ…YGYTSFDTFS (100 aa). 2 cysteine pairs are disulfide-bonded: C277-C345 and C336-C351. 4 N-linked (GlcNAc...) asparagine glycosylation sites follow: N295, N301, N306, and N338. An intramembrane region (pore-forming) is located at residues 370–384; it reads WAFLSLFRLMTQDFW. At 385–397 the chain is on the extracellular side; it reads ENLYQLTLRAAGK. A helical transmembrane segment spans residues 398 to 423; it reads TYMIFFVLVIFLGSFYLINLILAVVA. Residues 424 to 768 lie on the Cytoplasmic side of the membrane; the sequence is MAYEEQNQAT…HIVNLVVMDP (345 aa). The disordered stretch occupies residues 455-528; sequence QEAAQQAAAT…EFHKSESEDS (74 aa). A compositionally biased stretch (low complexity) spans 456-466; sequence EAAQQAAATTA. S470 is modified (phosphoserine). Over residues 479–492 the composition is skewed to low complexity; it reads LSDSSSEASKLSSK. Positions 495–506 are enriched in basic residues; it reads KERRNRRKKRKQ. Residues 507–528 are compositionally biased toward basic and acidic residues; the sequence is KEQSGGEEKDDDEFHKSESEDS. A phosphoserine mark is found at S523, S525, S550, S551, S607, and S730. Positions 584–627 are disordered; that stretch reads VGSENDFADDEHSTFEDNESRRDSLFVPRRHGERRNSNLSQTSR. Residues 593-607 show a composition bias toward basic and acidic residues; it reads DEHSTFEDNESRRDS. The II repeat unit spans residues 750 to 1022; that stretch reads CSPYWLKVKH…QIAVDRMHKG (273 aa). A helical membrane pass occupies residues 769–787; the sequence is FVDLAITICIVLNTLFMAM. The Extracellular segment spans residues 788-797; it reads EHYPMTEHFN. A helical membrane pass occupies residues 798–820; it reads HVLTVGNLVFTGIFTAEMFLKII. Over 821-830 the chain is Cytoplasmic; the sequence is AMDPYYYFQE. Residues 831-849 traverse the membrane as a helical segment; it reads GWNIFDGFIVTLSLVELGL. At 850-854 the chain is on the extracellular side; sequence ANVEG. The chain crosses the membrane as a helical span at residues 855–874; that stretch reads LSVLRSFRLLRVFKLAKSWP. Residues 875–891 are Cytoplasmic-facing; the sequence is TLNMLIKIIGNSVGALG. A helical membrane pass occupies residues 892 to 912; sequence NLTLVLAIIVFIFAVVGMQLF. Topologically, residues 913-938 are extracellular; sequence GKSYKDCVCKIATDCKLPRWHMNDFF. C921 and C927 are disulfide-bonded. The segment at residues 939-952 is an intramembrane region (pore-forming); that stretch reads HSFLIVFRVLCGEW. Residues 953–965 are Extracellular-facing; sequence IETMWDCMEVAGQ. The cysteines at positions 959 and 968 are disulfide-linked. A helical membrane pass occupies residues 966–992; the sequence is AMCLTVFMMVMVIGNLVVLNLFLALLL. Residues 993–1218 lie on the Cytoplasmic side of the membrane; that stretch reads SSFSADNLAA…RTCFRIVEHN (226 aa). Residues 1129–1163 are disordered; that stretch reads TEDFSSESDLEESKEKLNESSSSSEGSTVDIGAPA. Residues 1200–1514 form an III repeat; that stretch reads RGKQWWNLRR…KKYYNAMKKL (315 aa). The helical transmembrane segment at 1219–1237 threads the bilayer; the sequence is WFETFIVFMILLSSGALAF. The Extracellular segment spans residues 1238–1250; it reads EDIYIDQRKTIKT. A helical membrane pass occupies residues 1251–1276; sequence MLEYADKVFTYIFILEMLLKWVAYGY. Residues 1277 to 1278 are Cytoplasmic-facing; that stretch reads QT. Residues 1279–1304 form a helical membrane-spanning segment; it reads YFTNAWCWLDFLIVDVSLVSLTANAL. At 1305 to 1313 the chain is on the extracellular side; the sequence is GYSELGAIK. Residues 1314–1332 form a helical membrane-spanning segment; that stretch reads SLRTLRALRPLRALSRFEG. The Cytoplasmic portion of the chain corresponds to 1333–1345; the sequence is MRVVVNALLGAIP. The helical transmembrane segment at 1346 to 1369 threads the bilayer; the sequence is SIMNVLLVCLIFWLIFSIMGVNLF. Residues 1370 to 1415 lie on the Extracellular side of the membrane; sequence AGKFYHCVNTTTGDIFEISEVNNHSDCLKLIERNETARWKNVKVNF. C1376 and C1396 form a disulfide bridge. The pore-forming intramembrane region spans 1416–1433; that stretch reads DNVGFGYLSLLQVATFKG. Residues 1434–1457 lie on the Extracellular side of the membrane; that stretch reads WMDIMYAAVDSRNVELQPKYEESL. A helical transmembrane segment spans residues 1458-1483; it reads YMYLYFVIFIIFGSFFTLNLFIGVII. Over 1484–1541 the chain is Cytoplasmic; the sequence is DNFNQQKKKFGGQDIFMTEEQKKYYNAMKKLGSKKPQKPIPRPGNKFQGMVFDFVTRQ. S1516 bears the Phosphoserine; by PKC mark. The stretch at 1523–1821 is one IV repeat; it reads IPRPGNKFQG…WEKFDPDATQ (299 aa). Residues 1542–1560 form a helical membrane-spanning segment; sequence VFDISIMILICLNMVTMMV. Residues 1561–1571 lie on the Extracellular side of the membrane; sequence ETDDQSDYVTS. Residues 1561–1571 are S1-S2 loop of repeat IV; that stretch reads ETDDQSDYVTS. The helical transmembrane segment at 1572 to 1593 threads the bilayer; that stretch reads ILSRINLVFIVLFTGECVLKLI. The Cytoplasmic portion of the chain corresponds to 1594 to 1601; the sequence is SLRHYYFT. The chain crosses the membrane as a helical span at residues 1602–1623; it reads IGWNIFDFVVVILSIVGMFLAE. Residues 1619–1636 form an S3b-S4 loop of repeat IV region; sequence MFLAELIEKYFVSPTLFR. Over 1624–1636 the chain is Extracellular; the sequence is LIEKYFVSPTLFR. The helical transmembrane segment at 1637–1655 threads the bilayer; it reads VIRLARIGRILRLIKGAKG. Residues 1656–1665 lie on the Cytoplasmic side of the membrane; the sequence is IRTLLFALMM. The helical transmembrane segment at 1666–1688 threads the bilayer; sequence SLPALFNIGLLLFLVMFIYAIFG. The Extracellular portion of the chain corresponds to 1689 to 1711; it reads MSNFAYVKREVGIDDMFNFETFG. Positions 1712–1726 form an intramembrane region, pore-forming; the sequence is NSMICLFQITTSAGW. The Extracellular portion of the chain corresponds to 1727–1759; sequence DGLLAPILNSKPPDCDPNKVNPGSSVKGDCGNP. An intrachain disulfide couples C1741 to C1756. Residues 1760-1788 form a helical membrane-spanning segment; that stretch reads SVGIFFFVSYIIISFLVVVNMYIAVILEN. Topologically, residues 1789–2009 are cytoplasmic; it reads FSVATEESAE…EGKDEKAKGK (221 aa). Positions 1915-1944 constitute an IQ domain; sequence EEVSAVIIQRAYRRHLLKRTVKQASFTYNK. The segment at 1984-2009 is disordered; that stretch reads PSYDRVTKPIVEKHEQEGKDEKAKGK. Over residues 1988 to 2009 the composition is skewed to basic and acidic residues; that stretch reads RVTKPIVEKHEQEGKDEKAKGK.

This sequence belongs to the sodium channel (TC 1.A.1.10) family. Nav1.1/SCN1A subfamily. As to quaternary structure, the Nav1.1 voltage-gated sodium channel consists of an ion-conducting alpha subunit SCN1A which is functional on its own regulated by one or more beta-1 (SCN1B), beta-2 (SCN2B), beta-3 (SCN3B) and beta-4 (SCN4B) subunits. SCN1B and SCN3B are non-covalently associated with SCN1A. SCN2B and SCN4B are disulfide-linked to SCN1A. SCN1B regulates both the expression at the plasma membrane and the voltage dependence of Nav1.1 inactivation. SCN3B and SCN4B reduce Nav1.1 conductance. Probably interacts with TMEM233; modulates the gating properties of NaV1.1. Interacts with FGF13; regulates the steady-state inactivation of Nav.1.1. Post-translationally, phosphorylation at Ser-1516 by PKC in a highly conserved cytoplasmic loop slows inactivation of the sodium channel and reduces peak sodium currents. In terms of tissue distribution, present in cerebellar Purkinje neurons (at protein level). Expressed by myelinated, non-C-fiber neurons in sensory ganglia.

The protein localises to the cell membrane. It carries out the reaction Na(+)(in) = Na(+)(out). With respect to regulation, activated by the spider toxins Hm1a and Hm1b (H.maculata, AC P60992 and AC P0DOC5) eliciting acute pain and mechanical allodynia. Pore-forming subunit of Nav1.1, a voltage-gated sodium (Nav) channel that directly mediates the depolarizing phase of action potentials in excitable membranes. Navs, also called VGSCs (voltage-gated sodium channels) or VDSCs (voltage-dependent sodium channels), operate by switching between closed and open conformations depending on the voltage difference across the membrane. In the open conformation they allow Na(+) ions to selectively pass through the pore, along their electrochemical gradient. The influx of Na(+) ions provokes membrane depolarization, initiating the propagation of electrical signals throughout cells and tissues. By regulating the excitability of neurons, ensures that they respond appropriately to synaptic inputs, maintaining the balance between excitation and inhibition in brain neural circuits. Nav1.1 plays a role in controlling the excitability and action potential propagation from somatosensory neurons, thereby contributing to the sensory perception of mechanically-induced pain. The chain is Sodium channel protein type 1 subunit alpha from Mus musculus (Mouse).